The primary structure comprises 149 residues: MPVDQEKLAKLHKLSAANKVGGTRRKINKKGNLYNNNDKDNTKLQAELHKLHPMTIENVAEANFFKKNGKVLHFNSAVVQIAPQCNLTMIHGQPKENTLNGLYPSVASQLGSQELEYLTGLAHNLENEQTVLDQLGDRCSETKQQVMNS.

In terms of domain architecture, NAC-A/B spans 38-103; the sequence is DKDNTKLQAE…PKENTLNGLY (66 aa).

It belongs to the NAC-beta family. In terms of assembly, part of the nascent polypeptide-associated complex (NAC), consisting of EGD2 and either EGD1 or BTT1. NAC associates with ribosomes via EGD1 or BTT1.

Its subcellular location is the cytoplasm. The protein resides in the nucleus. In terms of biological role, acts as a component of the nascent polypeptide-associated complex (NAC), which promotes mitochondrial protein import by enhancing productive ribosome interactions with the outer mitochondrial membrane. Also blocks the inappropriate interaction of ribosomes translating non-secretory nascent polypeptides with translocation sites in the membrane of the endoplasmic reticulum. BTT1 may act as a transcription factor that exert a negative effect on the expression of several genes that are transcribed by RNA polymerase II. In Saccharomyces cerevisiae (strain ATCC 204508 / S288c) (Baker's yeast), this protein is Nascent polypeptide-associated complex subunit beta-2 (BTT1).